The chain runs to 424 residues: Histidine--tRNA ligase (424 aa).

It belongs to the class-II aminoacyl-tRNA synthetase family. Homodimer.

The protein resides in the cytoplasm. It carries out the reaction tRNA(His) + L-histidine + ATP = L-histidyl-tRNA(His) + AMP + diphosphate + H(+). The polypeptide is Histidine--tRNA ligase (Shewanella frigidimarina (strain NCIMB 400)).